A 446-amino-acid chain; its full sequence is Transcriptional regulator STERILE APETALA (446 aa).

Over residues 1–10 (MSTSSSSSDN) the composition is skewed to low complexity. Positions 1-32 (MSTSSSSSDNGAGGSGGVFEAPSPSRPRRGAN) are disordered.

In terms of tissue distribution, expressed in inflorescence and floral meristems, young floral organ primordia, and later in ovule primordia.

The protein resides in the nucleus. Its function is as follows. Transcriptional regulator involved in the specification of floral identity. Acts as A class cadastral protein by repressing the C class floral homeotic gene AGAMOUS in the external flower organs in association with APETALA2 and other repressors. Is required to maintain floral meristem identity in concert with AGAMOUS. Also interacts with APETALA2 to ensure the normal development of ovule. In Arabidopsis thaliana (Mouse-ear cress), this protein is Transcriptional regulator STERILE APETALA (SAP).